A 274-amino-acid chain; its full sequence is Urease accessory protein UreD 2 (274 aa).

It belongs to the UreD family. As to quaternary structure, ureD, UreF and UreG form a complex that acts as a GTP-hydrolysis-dependent molecular chaperone, activating the urease apoprotein by helping to assemble the nickel containing metallocenter of UreC. The UreE protein probably delivers the nickel.

The protein localises to the cytoplasm. Required for maturation of urease via the functional incorporation of the urease nickel metallocenter. The polypeptide is Urease accessory protein UreD 2 (Brucella anthropi (strain ATCC 49188 / DSM 6882 / CCUG 24695 / JCM 21032 / LMG 3331 / NBRC 15819 / NCTC 12168 / Alc 37) (Ochrobactrum anthropi)).